Reading from the N-terminus, the 285-residue chain is Bifunctional protein FolD (285 aa).

NADP(+) contacts are provided by residues 165–167 (GRS) and S190.

It belongs to the tetrahydrofolate dehydrogenase/cyclohydrolase family. In terms of assembly, homodimer.

The catalysed reaction is (6R)-5,10-methylene-5,6,7,8-tetrahydrofolate + NADP(+) = (6R)-5,10-methenyltetrahydrofolate + NADPH. It carries out the reaction (6R)-5,10-methenyltetrahydrofolate + H2O = (6R)-10-formyltetrahydrofolate + H(+). Its pathway is one-carbon metabolism; tetrahydrofolate interconversion. In terms of biological role, catalyzes the oxidation of 5,10-methylenetetrahydrofolate to 5,10-methenyltetrahydrofolate and then the hydrolysis of 5,10-methenyltetrahydrofolate to 10-formyltetrahydrofolate. This chain is Bifunctional protein FolD, found in Burkholderia pseudomallei (strain 1106a).